The sequence spans 301 residues: GTP cyclohydrolase FolE2 (301 aa).

It belongs to the GTP cyclohydrolase IV family.

It catalyses the reaction GTP + H2O = 7,8-dihydroneopterin 3'-triphosphate + formate + H(+). It participates in cofactor biosynthesis; 7,8-dihydroneopterin triphosphate biosynthesis; 7,8-dihydroneopterin triphosphate from GTP: step 1/1. Functionally, converts GTP to 7,8-dihydroneopterin triphosphate. The sequence is that of GTP cyclohydrolase FolE2 from Pseudomonas syringae pv. syringae (strain B728a).